A 153-amino-acid chain; its full sequence is 3-hydroxyacyl-[acyl-carrier-protein] dehydratase FabZ (153 aa).

The active site involves His-57.

This sequence belongs to the thioester dehydratase family. FabZ subfamily.

The protein localises to the cytoplasm. It catalyses the reaction a (3R)-hydroxyacyl-[ACP] = a (2E)-enoyl-[ACP] + H2O. Functionally, involved in unsaturated fatty acids biosynthesis. Catalyzes the dehydration of short chain beta-hydroxyacyl-ACPs and long chain saturated and unsaturated beta-hydroxyacyl-ACPs. This chain is 3-hydroxyacyl-[acyl-carrier-protein] dehydratase FabZ, found in Vibrio cholerae serotype O1 (strain ATCC 39315 / El Tor Inaba N16961).